The chain runs to 440 residues: Lipopolysaccharide-processing protein LpsZ (440 aa).

To E.coli capsule polysaccharide export protein KpsC.

The protein localises to the cytoplasm. Functionally, involved in the invasion of nitrogen fixation nodules. May be involved in the biosynthesis of lipopolysaccharides as an enzyme or a regulatory protein. The chain is Lipopolysaccharide-processing protein LpsZ (lpsZ) from Rhizobium meliloti (Ensifer meliloti).